A 450-amino-acid polypeptide reads, in one-letter code: Phosphoglucosamine mutase (450 aa).

The Phosphoserine intermediate role is filled by serine 101. Residues serine 101, aspartate 241, aspartate 243, and aspartate 245 each contribute to the Mg(2+) site. Serine 101 bears the Phosphoserine mark.

It belongs to the phosphohexose mutase family. The cofactor is Mg(2+). In terms of processing, activated by phosphorylation.

The enzyme catalyses alpha-D-glucosamine 1-phosphate = D-glucosamine 6-phosphate. Catalyzes the conversion of glucosamine-6-phosphate to glucosamine-1-phosphate. This Listeria innocua serovar 6a (strain ATCC BAA-680 / CLIP 11262) protein is Phosphoglucosamine mutase.